The chain runs to 613 residues: MGEAFYTVKLERLESHDTEGLSFQEVQKNTYDFECPWKDDEGNSKRVLTLQKENLPGRRDQRDRRAAGNRLIENQLGVSFQSHLPELQQFQGEGKIYEYNQVEKSLSNRGKHYKCDECGKVFNQNSRLTSHKRIHTGEKPYRCNECGKAFTVRSNLTIHQVIHTGEKPYKCNECGKVFSQPSNLAGHQRIHTGEKPYKCNECGKAFRAHSKLTTHQVIHTGEKPYKCNECGKCFTQNSHLASHRRIHTGEKPYKCNECGKAFSVRSSLTTHQTIHTGEKPYKCNECGKVFRHNSYLTKHRRVHTGEKPYKCNECGKAFSMHSNLTKHQIIHTGEKPFKCNECVKVFTQYSHLANHRRIHTGEKPYRCDECGKAFSVRSSLTTHQAIHTGEKPYKCNDCGKVFTQNSHLASHRGIHSGEKPYKCDECGKAFSQTSQLARHWRVHTGEKPYKCNECGKAFSVHSSLTTHQTIHTGQKPYKCNDCGKVFRHNSYLAVHQRIHTGEKPYKCNECGKAFSVHSNLATHQVIHTGEKPYKCNECGKVFTQNSHLANHRRIHTGEKPYRCNECGKAFSVRSTLTTHMAIHTGDKPYKCNECGKVFTQNSNLAKHRRIHSG.

18 C2H2-type zinc fingers span residues 113 to 135 (YKCDECGKVFNQNSRLTSHKRIH), 141 to 163 (YRCNECGKAFTVRSNLTIHQVIH), 169 to 191 (YKCNECGKVFSQPSNLAGHQRIH), 197 to 219 (YKCNECGKAFRAHSKLTTHQVIH), 225 to 247 (YKCNECGKCFTQNSHLASHRRIH), 253 to 275 (YKCNECGKAFSVRSSLTTHQTIH), 281 to 303 (YKCNECGKVFRHNSYLTKHRRVH), 309 to 331 (YKCNECGKAFSMHSNLTKHQIIH), 337 to 359 (FKCNECVKVFTQYSHLANHRRIH), 365 to 387 (YRCDECGKAFSVRSSLTTHQAIH), 393 to 415 (YKCNDCGKVFTQNSHLASHRGIH), 421 to 443 (YKCDECGKAFSQTSQLARHWRVH), 449 to 471 (YKCNECGKAFSVHSSLTTHQTIH), 477 to 499 (YKCNDCGKVFRHNSYLAVHQRIH), 505 to 527 (YKCNECGKAFSVHSNLATHQVIH), 533 to 555 (YKCNECGKVFTQNSHLANHRRIH), 561 to 583 (YRCNECGKAFSVRSTLTTHMAIH), and 589 to 611 (YKCNECGKVFTQNSNLAKHRRIH).

The protein belongs to the krueppel C2H2-type zinc-finger protein family.

The protein localises to the nucleus. May be involved in transcriptional regulation. This is Zinc finger protein 665 (ZNF665) from Pongo abelii (Sumatran orangutan).